A 454-amino-acid polypeptide reads, in one-letter code: Immediate-early protein ICP-46 homolog (454 aa).

A coiled-coil region spans residues 330–357 (EKDIETIEKYEKTIQELIVELHNLYLKR). The tract at residues 428-454 (SSPTASLSSLSPPSSNNNSPIRSPIRM) is disordered.

It belongs to the IIV-6 393L family.

This chain is Immediate-early protein ICP-46 homolog, found in Invertebrate iridescent virus 6 (IIV-6).